We begin with the raw amino-acid sequence, 173 residues long: Translation initiation factor IF-3 (173 aa).

This sequence belongs to the IF-3 family. As to quaternary structure, monomer.

Its subcellular location is the cytoplasm. In terms of biological role, IF-3 binds to the 30S ribosomal subunit and shifts the equilibrium between 70S ribosomes and their 50S and 30S subunits in favor of the free subunits, thus enhancing the availability of 30S subunits on which protein synthesis initiation begins. The protein is Translation initiation factor IF-3 of Aromatoleum aromaticum (strain DSM 19018 / LMG 30748 / EbN1) (Azoarcus sp. (strain EbN1)).